A 4349-amino-acid polypeptide reads, in one-letter code: Dynein heavy chain, cytoplasmic (4349 aa).

The stem stretch occupies residues methionine 1–asparagine 1907. Coiled-coil stretches lie at residues tryptophan 459–lysine 480, leucine 1178–glutamine 1215, serine 1266–isoleucine 1293, glutamate 1334–leucine 1354, tyrosine 1560–valine 1577, and asparagine 1640–arginine 1670. AAA stretches follow at residues tyrosine 1908–serine 2133, asparagine 2201–alanine 2459, glutamate 2565–glycine 2814, and threonine 2908–valine 3177. Glycine 1946–threonine 1953 serves as a coordination point for ATP. A coiled-coil region spans residues alanine 2194–leucine 2217. Residues glycine 2239–serine 2246, glycine 2604–threonine 2611, and glycine 2946–threonine 2953 each bind ATP. Coiled-coil stretches lie at residues leucine 3186–alanine 3294, glycine 3420–arginine 3477, and aspartate 3774–isoleucine 3807. Residues leucine 3186–arginine 3477 form a stalk region. 2 AAA regions span residues leucine 3563–alanine 3792 and alanine 4001–threonine 4213.

It belongs to the dynein heavy chain family. In terms of assembly, consists of at least two heavy chains and a number of intermediate and light chains.

Its subcellular location is the cytoplasm. It localises to the cytoskeleton. Cytoplasmic dynein acts as a motor for the intracellular retrograde motility of vesicles and organelles along microtubules. Dynein has ATPase activity; the force-producing power stroke is thought to occur on release of ADP. In Fusarium vanettenii (Neocosmospora pisi), this protein is Dynein heavy chain, cytoplasmic (DHC1).